Reading from the N-terminus, the 383-residue chain is Omega-6 fatty acid desaturase, endoplasmic reticulum isozyme 2 (383 aa).

A run of 3 helical transmembrane segments spans residues 61–81 (TIAF…PGPL), 85–105 (GMAI…VIAH), and 117–137 (LLDD…YFSW). The short motif at 105 to 109 (HECGH) is the Histidine box-1 element. The Histidine box-2 motif lies at 141 to 145 (HRRHH). The next 3 helical transmembrane spans lie at 179-199 (VLTL…LNVS), 225-245 (IYIS…LAMA), and 249-269 (AWVV…LVLI). Positions 315–319 (HVAHH) match the Histidine box-3 motif.

This sequence belongs to the fatty acid desaturase type 1 family.

The protein resides in the endoplasmic reticulum membrane. It functions in the pathway lipid metabolism; polyunsaturated fatty acid biosynthesis. Functionally, ER (microsomal) omega-6 fatty acid desaturase introduces the second double bond in the biosynthesis of 18:3 fatty acids, important constituents of plant membranes. It is thought to use cytochrome b5 as an electron donor and to act on fatty acids esterified to phosphatidylcholine and, possibly, other phospholipids. This is Omega-6 fatty acid desaturase, endoplasmic reticulum isozyme 2 (FAD2-2) from Glycine max (Soybean).